The primary structure comprises 172 residues: Disulfide bond formation protein B (172 aa).

Topologically, residues 1 to 11 (MNPFRWSFRAQ) are cytoplasmic. Residues 12 to 28 (FLLGFLACAGLLAYAIY) traverse the membrane as a helical segment. At 29 to 46 (VQLHLGLEPCPLCIFQRI) the chain is on the periplasmic side. A disulfide bridge connects residues Cys-38 and Cys-41. The chain crosses the membrane as a helical span at residues 47-63 (AFAALAVFFLIGALHGP). Residues 64 to 70 (RAAGARK) are Cytoplasmic-facing. A helical transmembrane segment spans residues 71-88 (VYGVLSFIAAGVGMGIGA). At 89 to 145 (RHVWVQIRPKDMMSSCGPPLSFLSETMGPFEVFRTVLTGTGDCGNIDWRFLGLSMPM) the chain is on the periplasmic side. Cysteines 104 and 131 form a disulfide. The helical transmembrane segment at 146–164 (WSMVWFVGLALWALSAGFK) threads the bilayer. The Cytoplasmic segment spans residues 165–172 (ARRSSLHH).

It belongs to the DsbB family.

It is found in the cell inner membrane. Its function is as follows. Required for disulfide bond formation in some periplasmic proteins. Acts by oxidizing the DsbA protein. In Xanthomonas oryzae pv. oryzae (strain MAFF 311018), this protein is Disulfide bond formation protein B.